A 351-amino-acid chain; its full sequence is Protein IBD2 (351 aa).

Residues 1 to 14 are compositionally biased toward polar residues; the sequence is MTPTNQSSGTTNAS. A disordered region spans residues 1-20; the sequence is MTPTNQSSGTTNASVEVLSE. Residues Ser100 and Ser106 each carry the phosphoserine modification. Thr211 bears the Phosphothreonine mark. Positions 223–249 are disordered; sequence LHGDGQHSISSRKHSRSKNSKKNGHVR. A compositionally biased stretch (basic residues) spans 232–249; the sequence is SSRKHSRSKNSKKNGHVR.

This sequence belongs to the IBD2 family. Interacts with BFA1.

It localises to the cytoplasm. The protein resides in the cytoskeleton. Its subcellular location is the spindle pole. In terms of biological role, part of a checkpoint which monitors spindle integrity and prevents premature exit from mitosis. This cell-cycle arrest depends upon inhibition of the G-protein TEM1 by the BFA1/BUB2 complex. This chain is Protein IBD2 (IBD2), found in Saccharomyces cerevisiae (strain ATCC 204508 / S288c) (Baker's yeast).